A 161-amino-acid chain; its full sequence is uncharacterized protein (161 aa).

This is an uncharacterized protein from Encephalitozoon cuniculi (strain GB-M1) (Microsporidian parasite).